The primary structure comprises 131 residues: uncharacterized protein (131 aa).

The next 2 membrane-spanning stretches (helical) occupy residues 52–72 (LIMI…FYLV) and 97–117 (SDII…YDVG).

The protein resides in the membrane. This is an uncharacterized protein from Acanthamoeba polyphaga mimivirus (APMV).